The chain runs to 181 residues: Transcriptional repressor NrdR (181 aa).

A zinc finger lies at 3 to 34 (CLFCQHTDTRVIDSRVSEDGATIRRRRECEAC). In terms of domain architecture, ATP-cone spans 49–139 (PVIIKKDGGR…VYRSFQDVAD (91 aa)).

It belongs to the NrdR family. Zn(2+) is required as a cofactor.

Its function is as follows. Negatively regulates transcription of bacterial ribonucleotide reductase nrd genes and operons by binding to NrdR-boxes. The sequence is that of Transcriptional repressor NrdR from Xylella fastidiosa (strain M12).